A 291-amino-acid polypeptide reads, in one-letter code: Nucleotide-binding protein Ccel_2290 (291 aa).

ATP is bound at residue Gly-8–Ser-15. A GTP-binding site is contributed by Asp-59–Gly-62.

It belongs to the RapZ-like family.

Functionally, displays ATPase and GTPase activities. The protein is Nucleotide-binding protein Ccel_2290 of Ruminiclostridium cellulolyticum (strain ATCC 35319 / DSM 5812 / JCM 6584 / H10) (Clostridium cellulolyticum).